Reading from the N-terminus, the 635-residue chain is Threonine--tRNA ligase (635 aa).

The TGS domain maps to 1–61 (MIQITLPDAS…EKDSALSIIT (61 aa)). Residues 242 to 533 (DHRKLGKELD…LIEEHAGALP (292 aa)) are catalytic. Positions 333, 384, and 510 each coordinate Zn(2+).

This sequence belongs to the class-II aminoacyl-tRNA synthetase family. Homodimer. It depends on Zn(2+) as a cofactor.

It is found in the cytoplasm. It catalyses the reaction tRNA(Thr) + L-threonine + ATP = L-threonyl-tRNA(Thr) + AMP + diphosphate + H(+). Catalyzes the attachment of threonine to tRNA(Thr) in a two-step reaction: L-threonine is first activated by ATP to form Thr-AMP and then transferred to the acceptor end of tRNA(Thr). Also edits incorrectly charged L-seryl-tRNA(Thr). This Polaromonas sp. (strain JS666 / ATCC BAA-500) protein is Threonine--tRNA ligase.